An 83-amino-acid polypeptide reads, in one-letter code: Defensin-1 (83 aa).

The signal sequence occupies residues 1–33 (MAGKGVGSRLSTLFLLVLLVITIGMMQVQVAEG). Disulfide bonds link Cys-36/Cys-82, Cys-47/Cys-67, Cys-53/Cys-76, and Cys-57/Cys-78.

This sequence belongs to the DEFL family.

Its subcellular location is the secreted. In terms of biological role, plant defense peptide. Has antifungal activity against B.cinera, F.oxysporum, F.solani and H.annosum with IC(50) values of 0.4 ug/ml, 2.9 ug/ml, 0.9 ug/ml and 1.4 ug/ml, respectively. Has modest antifungal activity against C.albicans and T.reesei. Causes thickening of F.oxysporum hyphae and an increase in their branching. Lacks antibacterial activity against the Gram-negative bacteria E.coli and E.carotovora. This is Defensin-1 from Pinus sylvestris (Scotch pine).